The following is a 313-amino-acid chain: 2,3-dihydroxyphenylpropionate/2,3-dihydroxicinnamic acid 1,2-dioxygenase (313 aa).

The active-site Proton donor is H116. Catalysis depends on H180, which acts as the Proton acceptor.

This sequence belongs to the LigB/MhpB extradiol dioxygenase family. As to quaternary structure, homotetramer. Fe(2+) is required as a cofactor.

The enzyme catalyses 3-(2,3-dihydroxyphenyl)propanoate + O2 = (2Z,4E)-2-hydroxy-6-oxonona-2,4-dienedioate + H(+). It catalyses the reaction (2E)-3-(2,3-dihydroxyphenyl)prop-2-enoate + O2 = (2Z,4E,7E)-2-hydroxy-6-oxonona-2,4,7-trienedioate + H(+). It participates in aromatic compound metabolism; 3-phenylpropanoate degradation. In terms of biological role, catalyzes the non-heme iron(II)-dependent oxidative cleavage of 2,3-dihydroxyphenylpropionic acid and 2,3-dihydroxicinnamic acid into 2-hydroxy-6-ketononadienedioate and 2-hydroxy-6-ketononatrienedioate, respectively. The chain is 2,3-dihydroxyphenylpropionate/2,3-dihydroxicinnamic acid 1,2-dioxygenase from Mycobacterium sp. (strain MCS).